We begin with the raw amino-acid sequence, 408 residues long: Adenylosuccinate synthetase (408 aa).

GTP is bound by residues 12 to 18 and 40 to 42; these read GDEGKGK and GHT. D13 acts as the Proton acceptor in catalysis. Positions 13 and 40 each coordinate Mg(2+). Residues 13–16, 38–41, T121, R135, Q213, T228, and R292 contribute to the IMP site; these read DEGK and NAGH. H41 acts as the Proton donor in catalysis. Substrate is bound at residue 288–294; it reads TTTGRPR. Residues R294, 320–322, and 393–395 each bind GTP; these read KLD and STS.

The protein belongs to the adenylosuccinate synthetase family. In terms of assembly, homodimer. It depends on Mg(2+) as a cofactor.

Its subcellular location is the cytoplasm. It carries out the reaction IMP + L-aspartate + GTP = N(6)-(1,2-dicarboxyethyl)-AMP + GDP + phosphate + 2 H(+). Its pathway is purine metabolism; AMP biosynthesis via de novo pathway; AMP from IMP: step 1/2. In terms of biological role, plays an important role in the de novo pathway of purine nucleotide biosynthesis. Catalyzes the first committed step in the biosynthesis of AMP from IMP. This Thermus thermophilus (strain ATCC BAA-163 / DSM 7039 / HB27) protein is Adenylosuccinate synthetase.